A 495-amino-acid polypeptide reads, in one-letter code: Leucine aminopeptidase 2 (495 aa).

An N-terminal signal peptide occupies residues 1–21 (MKTQLLSLGVALTAISQGVIA). The region spanning 124-218 (PPADKITAEL…ADGKNLASLV (95 aa)) is the PA domain. N-linked (GlcNAc...) asparagine glycosylation is found at Asn142 and Asn235. His259 and Asp271 together coordinate Zn(2+). Asn272 is a glycosylation site (N-linked (GlcNAc...) asparagine). Glu303 (proton acceptor) is an active-site residue. Positions 304 and 332 each coordinate Zn(2+). An N-linked (GlcNAc...) asparagine glycan is attached at Asn352. Residue His430 coordinates Zn(2+). The interval 464–495 (GFPTRPKTGKRDVSPRGQSMPGGGCGHHSVFM) is disordered.

Belongs to the peptidase M28 family. M28A subfamily. As to quaternary structure, monomer. It depends on Zn(2+) as a cofactor.

The protein localises to the secreted. Extracellular aminopeptidase that releases a wide variety of amino acids from natural peptides and contributes to pathogenicity. This is Leucine aminopeptidase 2 (LAP2) from Arthroderma otae (strain ATCC MYA-4605 / CBS 113480) (Microsporum canis).